Reading from the N-terminus, the 195-residue chain is Cell division protein SepF (195 aa).

Residues 32 to 54 (RYSKTNSSETLAPEEEEPIRNRR) form a disordered region.

This sequence belongs to the SepF family. As to quaternary structure, homodimer. Interacts with FtsZ.

The protein localises to the cytoplasm. Its function is as follows. Cell division protein that is part of the divisome complex and is recruited early to the Z-ring. Probably stimulates Z-ring formation, perhaps through the cross-linking of FtsZ protofilaments. Its function overlaps with FtsA. This Gloeothece citriformis (strain PCC 7424) (Cyanothece sp. (strain PCC 7424)) protein is Cell division protein SepF.